We begin with the raw amino-acid sequence, 396 residues long: MAKAKFERNKPHVNIGTIGHVDHGKTTLTAAITTVLAQTGQAQAMNYASIDAAPEEKERGITINTAHVEYETENRHYAHVDCPGHADYVKNMITGAAQMDGAILVVSAADGPMPQTREHILLSKQVGVPYIVVFMNKCDMVDDEELLELVEMEIRDLLSQYEFPGDDTPVIKGSAKEALDNPTGEWAKKIGELMEAVDSYIPTPERATDKPFLMPVEDVFTITGRGTVATGRVERGIVKVGDQVEIIGLAEETKNTTVTGVEMFRKLLDQAQAGDNIGALLRGVDRNDIERGQCLAKPGSVKPYTKFKAEVYVLSKEEGGRHTPFFANYRPQFYFRTTDVTGIIQLPEGVEMIMPGDNTEFTVELIAPVAMEQGTRFAIREGGRTVGAGVVASIDA.

The tr-type G domain maps to 10–205 (KPHVNIGTIG…AVDSYIPTPE (196 aa)). The G1 stretch occupies residues 19–26 (GHVDHGKT). 19-26 (GHVDHGKT) lines the GTP pocket. T26 serves as a coordination point for Mg(2+). The G2 stretch occupies residues 60–64 (GITIN). Positions 81–84 (DCPG) are G3. Residues 81 to 85 (DCPGH) and 136 to 139 (NKCD) contribute to the GTP site. The tract at residues 136–139 (NKCD) is G4. The G5 stretch occupies residues 174 to 176 (SAK).

It belongs to the TRAFAC class translation factor GTPase superfamily. Classic translation factor GTPase family. EF-Tu/EF-1A subfamily. Monomer.

The protein resides in the cytoplasm. It carries out the reaction GTP + H2O = GDP + phosphate + H(+). Its function is as follows. GTP hydrolase that promotes the GTP-dependent binding of aminoacyl-tRNA to the A-site of ribosomes during protein biosynthesis. The protein is Elongation factor Tu of Brevibacillus brevis (strain 47 / JCM 6285 / NBRC 100599).